We begin with the raw amino-acid sequence, 227 residues long: Uridylate kinase (227 aa).

7–11 (KISGK) contacts ATP. Gly-44 lines the UMP pocket. ATP-binding residues include Gly-45 and Arg-49. UMP-binding positions include Asp-66 and 114–120 (FQPGQST). ATP is bound by residues Thr-140, Asn-141, Tyr-146, and Asp-149.

The protein belongs to the UMP kinase family. Homohexamer.

It is found in the cytoplasm. The catalysed reaction is UMP + ATP = UDP + ADP. The protein operates within pyrimidine metabolism; CTP biosynthesis via de novo pathway; UDP from UMP (UMPK route): step 1/1. Unlike most bacteria, is not activated by GTP. UTP acts as a competitive inhibitor against both substrates. High concentration of UMP abolishes the inhibition of UTP at low ATP concentrations, indicating that UTP binds to the acceptor site (UMP site). Catalyzes the reversible phosphorylation of UMP to UDP, with ATP as the most efficient phosphate donor. Is also able to phosphorylate dUMP, although much less efficiently. The polypeptide is Uridylate kinase (pyrH) (Saccharolobus solfataricus (strain ATCC 35092 / DSM 1617 / JCM 11322 / P2) (Sulfolobus solfataricus)).